We begin with the raw amino-acid sequence, 493 residues long: uncharacterized protein (493 aa).

Position 328 is a phosphoserine (Ser328). Residues 466–486 (AESNSGRGQNSKTKTTSVNLS) are compositionally biased toward polar residues. A disordered region spans residues 466–493 (AESNSGRGQNSKTKTTSVNLSRNKRTRT).

This is an uncharacterized protein from Schizosaccharomyces pombe (strain 972 / ATCC 24843) (Fission yeast).